A 167-amino-acid polypeptide reads, in one-letter code: Translation initiation factor IF-3 (167 aa).

The protein belongs to the IF-3 family. As to quaternary structure, monomer.

It is found in the cytoplasm. In terms of biological role, IF-3 binds to the 30S ribosomal subunit and shifts the equilibrium between 70S ribosomes and their 50S and 30S subunits in favor of the free subunits, thus enhancing the availability of 30S subunits on which protein synthesis initiation begins. The polypeptide is Translation initiation factor IF-3 (Bacillus anthracis).